The following is a 672-amino-acid chain: Glycine--tRNA ligase beta subunit (672 aa).

It belongs to the class-II aminoacyl-tRNA synthetase family. In terms of assembly, tetramer of two alpha and two beta subunits.

The protein localises to the cytoplasm. The enzyme catalyses tRNA(Gly) + glycine + ATP = glycyl-tRNA(Gly) + AMP + diphosphate. The polypeptide is Glycine--tRNA ligase beta subunit (glyS) (Thermotoga maritima (strain ATCC 43589 / DSM 3109 / JCM 10099 / NBRC 100826 / MSB8)).